A 342-amino-acid polypeptide reads, in one-letter code: GTPase Obg (342 aa).

One can recognise an Obg domain in the interval 1–159; it reads MQFIDQAKIE…KQLRLELKLL (159 aa). Residues 160-330 enclose the OBG-type G domain; sequence AEVGIIGLPN…MLQEIWGILD (171 aa). GTP contacts are provided by residues 166–173, 191–195, 213–216, 280–283, and 311–313; these read GLPNAGKS, FTTLI, DIPG, NKID, and SAV. Mg(2+) is bound by residues Ser-173 and Thr-193.

It belongs to the TRAFAC class OBG-HflX-like GTPase superfamily. OBG GTPase family. Monomer. The cofactor is Mg(2+).

It localises to the cytoplasm. Its function is as follows. An essential GTPase which binds GTP, GDP and possibly (p)ppGpp with moderate affinity, with high nucleotide exchange rates and a fairly low GTP hydrolysis rate. Plays a role in control of the cell cycle, stress response, ribosome biogenesis and in those bacteria that undergo differentiation, in morphogenesis control. The polypeptide is GTPase Obg (Nostoc punctiforme (strain ATCC 29133 / PCC 73102)).